The sequence spans 186 residues: UPF0301 protein Sfri_2850 (186 aa).

The protein belongs to the UPF0301 (AlgH) family.

This is UPF0301 protein Sfri_2850 from Shewanella frigidimarina (strain NCIMB 400).